A 946-amino-acid chain; its full sequence is Probable inactive ATP-dependent zinc metalloprotease FTSHI 1, chloroplastic (946 aa).

The N-terminal 54 residues, 1-54, are a transit peptide targeting the chloroplast; it reads MASIDNVFSLGTRFSIPENPKRSILKHATTSSFSARTQTRWRAPILRRSFTVLC. The next 3 membrane-spanning stretches (helical) occupy residues 289 to 309, 320 to 340, and 369 to 389; these read AVIA…VFAV, VVWP…LGVL, and VASS…MVLL. 470–477 is an ATP binding site; the sequence is GPPGCGKT.

In the N-terminal section; belongs to the AAA ATPase family. This sequence in the C-terminal section; belongs to the peptidase M41 family. In terms of assembly, oligomer.

The protein resides in the plastid. Its subcellular location is the chloroplast inner membrane. Functions in chloroplast biogenesis and chloroplast division. Required for plastid development during embryogenesis. Might be involved in chaperone functions or play a structural role in the thylakoid FtsH complex. This is Probable inactive ATP-dependent zinc metalloprotease FTSHI 1, chloroplastic from Arabidopsis thaliana (Mouse-ear cress).